A 136-amino-acid polypeptide reads, in one-letter code: Small ribosomal subunit protein uS11c (136 aa).

This sequence belongs to the universal ribosomal protein uS11 family. Part of the 30S ribosomal subunit.

The protein resides in the plastid. It is found in the chloroplast. This chain is Small ribosomal subunit protein uS11c, found in Guizotia abyssinica (Niger).